The sequence spans 275 residues: MSDDTPKFSVLMAIYIKDSPLFLSEALQSIYKNTVAPDEVIIIRDGKVTSELNSVIDSWRRYLNIKDFTLEKNMGLGAALNFGLNQCMHDLVIRADSDDINRTNRFECILDFMTKNGDVHILSSWVEEFEFNPGDKGIIKKVPSRNSILKYSKNRSPFNHPAVAFKKCEIMRVGGYGNEYLYEDYALWLKSLANGCNGDNIQQVLVDMRFSKETAKRRGGIKYAISEIKAQYHFYRANYISYQDFIINIITRIFVRLLPTSFRGYIYKKVIRRFL.

The protein belongs to the glycosyltransferase 2 family. Requires Mn(2+) as cofactor.

The protein resides in the cell inner membrane. It catalyses the reaction N-acetyl-alpha-D-glucosaminyl-di-trans,octa-cis-undecaprenyl diphosphate + UDP-alpha-D-galactose = beta-D-Gal-(1-&gt;3)-alpha-D-GlcNAc-di-trans,octa-cis-undecaprenyl diphosphate + UDP + H(+). Its pathway is bacterial outer membrane biogenesis; LPS O-antigen biosynthesis. Functionally, catalyzes the addition of Gal, the second sugar moiety of the O7-antigen repeating unit, to GlcNAc-pyrophosphate-undecaprenol. The polypeptide is UDP-Gal:alpha-D-GlcNAc-diphosphoundecaprenol beta-1,3-galactosyltransferase (wbbD) (Escherichia coli).